The chain runs to 179 residues: Ribosome maturation factor RimM (179 aa).

A PRC barrel domain is found at 95–174 (KDEFFYFDIL…QIFCTQDAFL (80 aa)).

This sequence belongs to the RimM family. Binds ribosomal protein uS19.

The protein resides in the cytoplasm. In terms of biological role, an accessory protein needed during the final step in the assembly of 30S ribosomal subunit, possibly for assembly of the head region. Essential for efficient processing of 16S rRNA. May be needed both before and after RbfA during the maturation of 16S rRNA. It has affinity for free ribosomal 30S subunits but not for 70S ribosomes. In Campylobacter jejuni subsp. doylei (strain ATCC BAA-1458 / RM4099 / 269.97), this protein is Ribosome maturation factor RimM.